The chain runs to 358 residues: Membrane-bound lytic murein transglycosylase C (358 aa).

The N-terminal stretch at 1-19 (MKITLKKLLILAIVPFLYA) is a signal peptide. C20 carries the N-palmitoyl cysteine lipid modification. C20 carries S-diacylglycerol cysteine lipidation.

Belongs to the transglycosylase Slt family.

Its subcellular location is the cell outer membrane. It carries out the reaction Exolytic cleavage of the (1-&gt;4)-beta-glycosidic linkage between N-acetylmuramic acid (MurNAc) and N-acetylglucosamine (GlcNAc) residues in peptidoglycan, from either the reducing or the non-reducing ends of the peptidoglycan chains, with concomitant formation of a 1,6-anhydrobond in the MurNAc residue.. Functionally, murein-degrading enzyme. May play a role in recycling of muropeptides during cell elongation and/or cell division. This is Membrane-bound lytic murein transglycosylase C from Actinobacillus succinogenes (strain ATCC 55618 / DSM 22257 / CCUG 43843 / 130Z).